Consider the following 225-residue polypeptide: Phosphoribosylformylglycinamidine synthase subunit PurQ (225 aa).

Positions 6–225 (FGVVVFPGSN…WQSILRSFAA (220 aa)) constitute a Glutamine amidotransferase type-1 domain. The Nucleophile role is filled by cysteine 89. Residues histidine 198 and glutamate 200 contribute to the active site.

In terms of assembly, part of the FGAM synthase complex composed of 1 PurL, 1 PurQ and 2 PurS subunits.

The protein resides in the cytoplasm. The enzyme catalyses N(2)-formyl-N(1)-(5-phospho-beta-D-ribosyl)glycinamide + L-glutamine + ATP + H2O = 2-formamido-N(1)-(5-O-phospho-beta-D-ribosyl)acetamidine + L-glutamate + ADP + phosphate + H(+). It carries out the reaction L-glutamine + H2O = L-glutamate + NH4(+). Its pathway is purine metabolism; IMP biosynthesis via de novo pathway; 5-amino-1-(5-phospho-D-ribosyl)imidazole from N(2)-formyl-N(1)-(5-phospho-D-ribosyl)glycinamide: step 1/2. In terms of biological role, part of the phosphoribosylformylglycinamidine synthase complex involved in the purines biosynthetic pathway. Catalyzes the ATP-dependent conversion of formylglycinamide ribonucleotide (FGAR) and glutamine to yield formylglycinamidine ribonucleotide (FGAM) and glutamate. The FGAM synthase complex is composed of three subunits. PurQ produces an ammonia molecule by converting glutamine to glutamate. PurL transfers the ammonia molecule to FGAR to form FGAM in an ATP-dependent manner. PurS interacts with PurQ and PurL and is thought to assist in the transfer of the ammonia molecule from PurQ to PurL. In Synechococcus sp. (strain JA-2-3B'a(2-13)) (Cyanobacteria bacterium Yellowstone B-Prime), this protein is Phosphoribosylformylglycinamidine synthase subunit PurQ.